A 579-amino-acid polypeptide reads, in one-letter code: Plastidial pyruvate kinase 2 (579 aa).

The transit peptide at 1–63 (MAQVVATRSI…SRRVVDTTVR (63 aa)) directs the protein to the chloroplast. The span at 6 to 24 (ATRSIQGSMLSPNGGSVST) shows a compositional bias: polar residues. A disordered region spans residues 6-26 (ATRSIQGSMLSPNGGSVSTRS). Arg140 lines the substrate pocket. Asn142, Ser144, Asp175, and Thr176 together coordinate K(+). Residue 142–145 (NMSH) coordinates ATP. Residue Arg182 participates in ATP binding. Position 325 (Lys325) interacts with substrate. A Mg(2+)-binding site is contributed by Glu327. Residues Gly350, Asp351, and Thr383 each contribute to the substrate site. Residue Asp351 coordinates Mg(2+).

It belongs to the pyruvate kinase family. In terms of assembly, oligomer of alpha and beta subunits. The cofactor is Mg(2+). K(+) is required as a cofactor. As to expression, mostly expressed in seeds, and, to a lower extent, in roots, leaves (veins and trichomes), inflorescences, siliques, pollen (grains and tubes) and flowers (sepals and petals).

It is found in the plastid. It localises to the chloroplast stroma. The protein localises to the mitochondrion. It catalyses the reaction pyruvate + ATP = phosphoenolpyruvate + ADP + H(+). It participates in carbohydrate degradation; glycolysis; pyruvate from D-glyceraldehyde 3-phosphate: step 5/5. Its function is as follows. Required for plastidial pyruvate kinase activity. Involved in seed oil accumulation, embryo development and seed storage compounds mobilization upon germination. The protein is Plastidial pyruvate kinase 2 (PKP2) of Arabidopsis thaliana (Mouse-ear cress).